The chain runs to 153 residues: Xanthine-guanine phosphoribosyltransferase (153 aa).

Residues 37-38, Arg-69, and 88-96 each bind 5-phospho-alpha-D-ribose 1-diphosphate; these read RG and DDLVDTGGT. GMP is bound at residue Arg-69. Position 89 (Asp-89) interacts with Mg(2+). 2 residues coordinate guanine: Asp-92 and Ile-135. Asp-92 and Ile-135 together coordinate xanthine. Residues 92-96 and 134-135 each bind GMP; these read DTGGT and WI.

The protein belongs to the purine/pyrimidine phosphoribosyltransferase family. XGPT subfamily. In terms of assembly, homotetramer. The cofactor is Mg(2+).

It localises to the cell membrane. It carries out the reaction GMP + diphosphate = guanine + 5-phospho-alpha-D-ribose 1-diphosphate. The enzyme catalyses XMP + diphosphate = xanthine + 5-phospho-alpha-D-ribose 1-diphosphate. It catalyses the reaction IMP + diphosphate = hypoxanthine + 5-phospho-alpha-D-ribose 1-diphosphate. It participates in purine metabolism; GMP biosynthesis via salvage pathway; GMP from guanine: step 1/1. Its pathway is purine metabolism; XMP biosynthesis via salvage pathway; XMP from xanthine: step 1/1. Functionally, purine salvage pathway enzyme that catalyzes the transfer of the ribosyl-5-phosphate group from 5-phospho-alpha-D-ribose 1-diphosphate (PRPP) to the N9 position of the 6-oxopurines guanine and xanthine to form the corresponding ribonucleotides GMP (guanosine 5'-monophosphate) and XMP (xanthosine 5'-monophosphate), with the release of PPi. To a lesser extent, also acts on hypoxanthine. This is Xanthine-guanine phosphoribosyltransferase from Buchnera aphidicola subsp. Baizongia pistaciae (strain Bp).